The following is a 1400-amino-acid chain: DNA-directed RNA polymerase subunit beta' (1400 aa).

The Zn(2+) site is built by cysteine 71, cysteine 73, cysteine 86, and cysteine 89. Mg(2+) contacts are provided by aspartate 462, aspartate 464, and aspartate 466. The Zn(2+) site is built by cysteine 820, cysteine 893, cysteine 900, and cysteine 903.

This sequence belongs to the RNA polymerase beta' chain family. The RNAP catalytic core consists of 2 alpha, 1 beta, 1 beta' and 1 omega subunit. When a sigma factor is associated with the core the holoenzyme is formed, which can initiate transcription. Mg(2+) serves as cofactor. The cofactor is Zn(2+).

The enzyme catalyses RNA(n) + a ribonucleoside 5'-triphosphate = RNA(n+1) + diphosphate. Its function is as follows. DNA-dependent RNA polymerase catalyzes the transcription of DNA into RNA using the four ribonucleoside triphosphates as substrates. The sequence is that of DNA-directed RNA polymerase subunit beta' from Methylobacterium nodulans (strain LMG 21967 / CNCM I-2342 / ORS 2060).